The following is a 533-amino-acid chain: MAASKVEIAPFEVTPLDAIPAVCSTARATFASHKTKNLQWRLVQLRKLYWALDDFKASLMAALQQDLRKGGYESDFTEVDWVKNDCLHMINNLETFAKTEKLKDLPVTYSMMNFRVKKEPLGTVLIIGPYNFPIQLVLAPLVGAIGAGCTAVIKPSELTPACAMAMKEMIESRLDRDAFAVVNGGVPETNALMEEKWDKIMFTGSAQVGSIIARKAAETLTPVCLELGGRNPAFVTKKANLALAARRLMWGKVLNAGQVCMSHNYVLVDKDVADTFIEFLKIAYKDMFPNGAKASPDLSRIVNARHFNRIKKMLDETKGKIVMGGEMDESELYIEPTAVLVDSLDDPMMQEESFGPIFSIYPVDTLDQALSIANNVHRTPLALMAFGDKSETNRILDEMTSGGACINDSYFHGAVHTVPFGGVGDSGWGAYRGKASFDNFTHFRTVSETPTWMDRFLRVRYMPYDWSELRLLQRWTNKKPNFDRQGTVAKGSEYWMWYFLGLGTKGGVKGALMRWLVVVAGYYLSAYMKARRA.

Catalysis depends on residues glutamate 226 and cysteine 260.

This sequence belongs to the aldehyde dehydrogenase family.

It carries out the reaction 4'-apo-beta-carotenal + NAD(+) + H2O = neurosporaxanthin + NADH + 2 H(+). Beta-apo-4'-carotenal oxygenase involved in the last step of synthesis of neurosporaxanthin, a carboxylic apocarotenoid acting as an essential protective pigment and leading to orange pigmentation. Converts the aldehyde beta-apo-4'-carotenal into neurosporaxanthin. Neurosporaxanthin is synthesized from geranyl-geranyl pyrophosphate (GGPP) through several enzymatic activities. Phytoene synthase activity performed by the bifunctional enzyme al-2 first produces phytoene from geranyl-geranyl pyrophosphate (GGPP). The phytoene dehydrogenase al-1 then introduces 5 desaturations to lead to 3,4-didehydrolycopene via the intermediates phytofluene, zeta-carotene, neurosporene and lycopene. Al-2 cyclase activity then converts 3,4-didehydrolycopene into torulene. Al-2 can also convet lycopene into gamma-carotene which in turn is converted to beta-carotene by an additional al-2 cyclization reaction. Torulene is the substrate of the dioxidase cao-2 that breaks the molecule, removing five carbon atoms to yield beta-apo-4'-carotenal, whereas the aldehyde dehydrogenase ylo-1 mediates the last step by converting beta-apo-4'-carotenal into neurosporaxanthin. In Neurospora crassa (strain ATCC 24698 / 74-OR23-1A / CBS 708.71 / DSM 1257 / FGSC 987), this protein is Beta-apo-4'-carotenal oxygenase.